The chain runs to 131 residues: D-ribose pyranase (131 aa).

His-20 (proton donor) is an active-site residue. Substrate contacts are provided by residues Asp-28, His-98, and 120–122; that span reads YAN.

It belongs to the RbsD / FucU family. RbsD subfamily. In terms of assembly, homodecamer.

Its subcellular location is the cytoplasm. It carries out the reaction beta-D-ribopyranose = beta-D-ribofuranose. Its pathway is carbohydrate metabolism; D-ribose degradation; D-ribose 5-phosphate from beta-D-ribopyranose: step 1/2. In terms of biological role, catalyzes the interconversion of beta-pyran and beta-furan forms of D-ribose. The polypeptide is D-ribose pyranase (Bacillus anthracis (strain A0248)).